A 591-amino-acid chain; its full sequence is Pentatricopeptide repeat-containing protein At3g47530 (591 aa).

PPR repeat units follow at residues 76-110, 112-146, 147-177, 178-208, 216-250, 251-281, 282-316, 317-351, and 354-384; these read TLSHCNTMIRAFSLSQTPCEGFRLFRSLRRNSSLP, NPLSSSFALKCCIKSGDLLGGLQIHGKIFSDGFLS, DSLLMTTLMDLYSTCENSTDACKVFDEIPKR, DTVSWNVLFSCYLRNKRTRDVLVLFDKMKND, DGVTCLLALQACANLGALDFGKQVHDFIDENGLSG, ALNLSNTLVSMYSRCGSMDKAYQVFYGMRER, NVVSWTALISGLAMNGFGKEAIEAFNEMLKFGISP, EEQTLTGLLSACSHSGLVAEGMMFFDRMRSGEFKI, and NLHHYGCVVDLLGRARLLDKAYSLIKSMEMK. The type E motif stretch occupies residues 389 to 464; sequence IWRTLLGACR…KPGCSAIELQ (76 aa). The type E(+) motif stretch occupies residues 465–495; that stretch reads GTVHEFIVDDVSHPRKEEIYKMLAEINQQLK. The type DYW motif stretch occupies residues 496–591; the sequence is IAGYVAEITS…GGSCSCNDFW (96 aa).

This sequence belongs to the PPR family. PCMP-H subfamily.

The sequence is that of Pentatricopeptide repeat-containing protein At3g47530 (PCMP-H76) from Arabidopsis thaliana (Mouse-ear cress).